The following is a 210-amino-acid chain: Transcriptional regulator GfcR (210 aa).

The interval Val-39–Ile-60 is disordered. Residues Pro-48–Ile-60 are compositionally biased toward basic and acidic residues.

Belongs to the purine/pyrimidine phosphoribosyltransferase family. GfcR subfamily.

With respect to regulation, interaction with effectors modulates GfcR activity. 2-keto-3-deoxy-6-phosphogluconate (KDPG), fructose-1,6-bisphosphate (FBP), 2-keto-3-deoxy-6-phosphogalactonate (KDPGal) and glycerol-3-phosphate (G3P), which are intermediates of sugar and glycerol degradation pathways, can act as inducer molecules. Functionally, DNA-binding transcriptional regulator that functions as a regulator of central sugar catabolic pathways. Is both a local regulator of specific steps in the pathways for D-glucose and D-fructose degradation and a global regulator of hexose catabolism. In the presence of D-glucose, activates expression of the gene encoding the gluconate dehydratase (gad), which is involved in D-glucose catabolism via the semiphosphorylative Entner-Doudoroff (spED) pathway. In the presence of D-fructose, activates expression of the genes encoding the PTS system EIIC component (ptfC) and the fructose-1,6-bisphosphate aldolase (fba), which are involved in D-fructose uptake and degradation via the modified Embden-Meyerhof pathway. In addition, in the presence of D-glucose, D-fructose, D-galactose or glycerol, it activates expression of the genes encoding glyceraldehyde-3-phosphate dehydrogenase (gap) and pyruvate kinase (pykA), enzymes common to all four degradation pathways. Acts by binding directly to the promoter region of the regulated genes. The chain is Transcriptional regulator GfcR from Haloferax volcanii (strain ATCC 29605 / DSM 3757 / JCM 8879 / NBRC 14742 / NCIMB 2012 / VKM B-1768 / DS2) (Halobacterium volcanii).